Here is a 368-residue protein sequence, read N- to C-terminus: Protein tesmin/TSO1-like CXC 8 (368 aa).

One can recognise a CRC domain in the interval 64-185; sequence KHKGCRCKQS…KCINCKNVSE (122 aa).

It belongs to the lin-54 family.

The protein localises to the nucleus. Functionally, plays a role in development of both male and female reproductive tissues. The chain is Protein tesmin/TSO1-like CXC 8 (TCX8) from Arabidopsis thaliana (Mouse-ear cress).